The following is a 595-amino-acid chain: P2X purinoceptor 7 (595 aa).

The Cytoplasmic segment spans residues 1-22; the sequence is MPACCSWNDVLQYETNKVTRIQ. A lipid anchor (S-palmitoyl cysteine) is attached at cysteine 4. Residues 23 to 46 form a helical membrane-spanning segment; the sequence is STNYGTVKWVLHMIVFSYISFALV. The Extracellular segment spans residues 47 to 328; it reads SDKLYQRKEP…ILVFGTGGKF (282 aa). An N-linked (GlcNAc...) asparagine glycan is attached at asparagine 74. Disulfide bonds link cysteine 119/cysteine 168, cysteine 129/cysteine 152, and cysteine 135/cysteine 162. Arginine 125 and arginine 133 each carry ADP-ribosylarginine; by ART2B. Asparagine 187 carries N-linked (GlcNAc...) asparagine glycosylation. Threonine 189 contributes to the ATP binding site. Asparagine 202 and asparagine 213 each carry an N-linked (GlcNAc...) asparagine glycan. A disulfide bridge links cysteine 216 with cysteine 226. Residue asparagine 241 is glycosylated (N-linked (GlcNAc...) asparagine). Cysteines 260 and 269 form a disulfide. Positions 294 and 311 each coordinate ATP. Residues 329–353 traverse the membrane as a helical segment; the sequence is DIIQLVVYIGSTLSYFGLATVCIDL. Serine 342 lines the Na(+) pocket. The Cytoplasmic portion of the chain corresponds to 354–595; that stretch reads LINTYSSAFC…GQYSGFKYPY (242 aa). The interval 360–377 is C-cys anchor; sequence SAFCRSGVYPYCKCCEPC. Residues cysteine 363, cysteine 374, and cysteine 377 are each lipidated (S-palmitoyl cysteine). Serine 390 is modified (phosphoserine). The interval 395–595 is cytoplasmic ballast; it reads KPTLKYVSFV…GQYSGFKYPY (201 aa). The Zn(2+) site is built by cysteine 479, cysteine 499, and cysteine 506. 4 residues coordinate GTP: arginine 546, histidine 547, tyrosine 550, and alanine 567. Cysteine 572 is a Zn(2+) binding site. Residues lysine 583, serine 589, and glycine 590 each coordinate GTP.

This sequence belongs to the P2X receptor family. Homotrimers. Interacts with LAMA3, ITGB2, ACTB, ACTN4, SVIL, MPP3, HSPA1, HSPCB, HSPA8, PIK230 and PTPRB. Interacts (via C-terminus) with EMP2. In terms of processing, phosphorylation results in its inactivation. Post-translationally, ADP-ribosylation at Arg-125 is necessary and sufficient to activate P2RX7 and gate the channel. Palmitoylation of several cysteines in the C-terminal cytoplasmic tail is required for efficient localization to cell surface. Palmitoylation prevents channel desensitization by physically anchoring the palmitoylated groups to the membrane.

Its subcellular location is the cell membrane. It catalyses the reaction Ca(2+)(in) = Ca(2+)(out). The catalysed reaction is K(+)(in) = K(+)(out). It carries out the reaction Na(+)(in) = Na(+)(out). Its activity is regulated as follows. Activated by high extracellular ATP levels (0.1-2.5 mM). The synthetic analog 2'(3')-O-(4-benzoylbenzoyl)ATP (BzATP) acts as a potent agonist. Does not undergo desensitization, instead, undergoes a facilitation process where currents progressively increase with repetitive or prolonged agonist application. Palmitoylation prevents channel desensitization. The permeability of the P2RX7 channel is modulated by the amount of cholesterol in the plasma membrane. Its function is as follows. ATP-gated nonselective transmembrane cation channel. Requires high millimolar-range concentrations of ATP to become activated. ATP binding trigers the rapid opening of the channel and allows Na(+) and Ca(2+) influx and K(+) efflux. Has also the ability to form a large pore in the cell membrane, allowing the passage of large cationic molecules. In microglia, may mediate NADPH transport across the plasma membrane. In immune cells, P2RX7 acts as a molecular sensor in pathological inflammatory states by detecting and responding to high local concentrations of extracellar ATP. In microglial cells, P2RX7 activation leads to the release of pro-inflammatory cytokines, such as IL-1beta and IL-18, through the activation of the NLRP3 inflammasome and caspase-1. Cooperates with KCNK6 to activate NLRP3 inflammasome. Activates death pathways leading to apoptosis and autophagy. Activates death pathways leading to pyroptosis. The polypeptide is P2X purinoceptor 7 (P2rx7) (Mus musculus (Mouse)).